The following is a 143-amino-acid chain: 18 kDa heat shock protein (143 aa).

Positions 23 to 135 (TWSRPTAMPM…KRRRVKVGQG (113 aa)) constitute a sHSP domain.

It belongs to the small heat shock protein (HSP20) family.

The chain is 18 kDa heat shock protein (hsp18) from Streptomyces albus G.